Here is a 581-residue protein sequence, read N- to C-terminus: MFLVGSSSHTLHRLRILPLLLLLQTLERGLGRASPAGAPLEDVVIERYHIPRACPREVQMGDFVRYHYNGTFEDGKKFDSSYDRSTLVAIVVGVGRLITGMDRGLMGMCVNERRRLIVPPHLGYGSIGVAGLIPPDATLYFDVVLLDVWNKADTVQSTILLRPPYCPRMVQNSDFVRYHYNGTLLDGTAFDNSYSRGGTYDTYIGSGWLIKGMDQGLLGMCPGEKRKIIIPPFLAYGEKGYGTVIPPQASLVFYVLLLDVHNPKDTVQLETLELPQGCVRRAVAGDFMRYHYNGSLMDGTLFDSSYSRNHTYNTYVGQGYIIPGMDQGLQGACIGERRRITVPPHLAYGENGTGDKIPGSAVLIFDVHVIDFHNPSDPVEIKTLSRPPENCNETSKIGDFIRYHYNCSLLDGTRLFSSHDYEAPQEITLGANKVIEGLDRGLQGMCVGERRQLIVPPHLAHGENGARGVPGSAVLLFEVELVSREDGLPTGYLFVWYQDPSTSLFEDMDLNKDGEVPPEEFSSFIKAQVNEGKGRLMPGQDPDKTISDMFQNQDRNQDGKITAEELKLKSDEDQERVHEEL.

An N-terminal signal peptide occupies residues 1 to 33; sequence MFLVGSSSHTLHRLRILPLLLLLQTLERGLGRA. 3 consecutive PPIase FKBP-type domains span residues 61–149, 173–261, and 285–373; these read GDFV…LDVW, SDFV…LDVH, and GDFM…IDFH. N-linked (GlcNAc...) asparagine glycans are attached at residues N69, N181, N293, N309, N351, N392, and N406. Residues 398–485 enclose the PPIase FKBP-type 4 domain; that stretch reads GDFIRYHYNC…LFEVELVSRE (88 aa). EF-hand domains are found at residues 496 to 531 and 541 to 576; these read WYQD…QVNE and DPDK…DQER. Positions 509, 511, 513, 515, 520, 554, 556, 558, 560, and 565 each coordinate Ca(2+). Positions 533–581 are disordered; the sequence is KGRLMPGQDPDKTISDMFQNQDRNQDGKITAEELKLKSDEDQERVHEEL. Positions 555–581 are enriched in basic and acidic residues; it reads RNQDGKITAEELKLKSDEDQERVHEEL. Positions 578–581 match the Prevents secretion from ER motif; the sequence is HEEL.

In terms of processing, N-glycosylated. Post-translationally, phosphorylated. As to expression, expressed in aorta, brain, heart, kidney, lung, spleen and testis. Not detected in liver.

The protein resides in the endoplasmic reticulum lumen. It carries out the reaction [protein]-peptidylproline (omega=180) = [protein]-peptidylproline (omega=0). Its activity is regulated as follows. Inhibited by both FK506 and rapamycin, but not by cyclosporin A. PPIases accelerate the folding of proteins during protein synthesis. The sequence is that of Peptidyl-prolyl cis-trans isomerase FKBP10 (Fkbp10) from Mus musculus (Mouse).